A 500-amino-acid chain; its full sequence is MNLVLNGQDLTIESIKVLIAQDQNVEICEEALSRVKQSRKIVDDIIADQETVYGITTGFGLFSDVLIDQDKYEDLQLNLIRSHACGIGEPFNDDVALVMMILRLNTMLKGHSGVSTALVEQLVFFINQRIFPVIPAQGSLGASGDLAPLSHLALALVGEGEVIYKGVRQESSKVLQSLNRAPHTLQAKEGLALINGTQAMTSQGVISYIEAEQLAYDAEWIAALTHQALNGIVDAYDAHVHIVRNSKEQLSVANRMLDWLEGSSLTTRQGELRVQDAYSLRCIPQIHGASFQVLNYVKEKLECEMNAANDNPLIFDKDDETLVISGGNFHGQPVAFALDFLKIGVSELSNVSERRIERLVNPQLNGDLPAFLSPHPGLQSGAMIMQYAAASLVSENKTLAHPASVDSIPSSANQEDHVSMGTIASRHGYQIVENVRNVLAIECVIALQAVELKGVDKLSQKTKEKYEEYREFVPSITEDRQFHKDIKVVSDYLKRSAYKK.

Positions 142–144 form a cross-link, 5-imidazolinone (Ala-Gly); the sequence is ASG. At Ser-143 the chain carries 2,3-didehydroalanine (Ser).

The protein belongs to the PAL/histidase family. Post-translationally, contains an active site 4-methylidene-imidazol-5-one (MIO), which is formed autocatalytically by cyclization and dehydration of residues Ala-Ser-Gly.

It is found in the cytoplasm. The catalysed reaction is L-histidine = trans-urocanate + NH4(+). It participates in amino-acid degradation; L-histidine degradation into L-glutamate; N-formimidoyl-L-glutamate from L-histidine: step 1/3. The chain is Histidine ammonia-lyase from Macrococcus caseolyticus (strain JCSC5402) (Macrococcoides caseolyticum).